Here is a 321-residue protein sequence, read N- to C-terminus: ATP-dependent 6-phosphofructokinase (321 aa).

G12 contacts ATP. ADP is bound by residues 22 to 26 and 55 to 60; these read RGVVR and RYSVSD. Residues 73–74 and 103–106 each bind ATP; these read RF and GDGS. Residue D104 participates in Mg(2+) binding. 127 to 129 lines the substrate pocket; that stretch reads TID. D129 acts as the Proton acceptor in catalysis. Residue R156 coordinates ADP. Substrate contacts are provided by residues R164 and 171–173; that span reads MGR. ADP is bound by residues 187-189, R213, and 215-217; these read GCE and KRH. Residues E224, R245, and 251–254 contribute to the substrate site; that span reads HIQR.

This sequence belongs to the phosphofructokinase type A (PFKA) family. ATP-dependent PFK group I subfamily. Prokaryotic clade 'B1' sub-subfamily. In terms of assembly, homotetramer. Mg(2+) serves as cofactor.

The protein localises to the cytoplasm. The enzyme catalyses beta-D-fructose 6-phosphate + ATP = beta-D-fructose 1,6-bisphosphate + ADP + H(+). Its pathway is carbohydrate degradation; glycolysis; D-glyceraldehyde 3-phosphate and glycerone phosphate from D-glucose: step 3/4. Allosterically activated by ADP and other diphosphonucleosides, and allosterically inhibited by phosphoenolpyruvate. Catalyzes the phosphorylation of D-fructose 6-phosphate to fructose 1,6-bisphosphate by ATP, the first committing step of glycolysis. This chain is ATP-dependent 6-phosphofructokinase, found in Haemophilus influenzae (strain 86-028NP).